The primary structure comprises 873 residues: Bifunctional uridylyltransferase/uridylyl-removing enzyme (873 aa).

The interval 1 to 332 (MPYQCPITFN…NGGQTQEAEI (332 aa)) is uridylyltransferase. A uridylyl-removing region spans residues 333 to 692 (LDNDFQRRGS…ISKKATRGGT (360 aa)). In terms of domain architecture, HD spans 451–573 (VDEHSIRLLK…VRDEESLELL (123 aa)). 2 consecutive ACT domains span residues 693 to 777 (EVFV…RTPR) and 800 to 873 (LMEL…ELAP).

The protein belongs to the GlnD family. The cofactor is Mg(2+).

It carries out the reaction [protein-PII]-L-tyrosine + UTP = [protein-PII]-uridylyl-L-tyrosine + diphosphate. The catalysed reaction is [protein-PII]-uridylyl-L-tyrosine + H2O = [protein-PII]-L-tyrosine + UMP + H(+). Uridylyltransferase (UTase) activity is inhibited by glutamine, while glutamine activates uridylyl-removing (UR) activity. Modifies, by uridylylation and deuridylylation, the PII regulatory proteins (GlnB and homologs), in response to the nitrogen status of the cell that GlnD senses through the glutamine level. Under low glutamine levels, catalyzes the conversion of the PII proteins and UTP to PII-UMP and PPi, while under higher glutamine levels, GlnD hydrolyzes PII-UMP to PII and UMP (deuridylylation). Thus, controls uridylylation state and activity of the PII proteins, and plays an important role in the regulation of nitrogen assimilation and metabolism. The polypeptide is Bifunctional uridylyltransferase/uridylyl-removing enzyme (Vibrio atlanticus (strain LGP32) (Vibrio splendidus (strain Mel32))).